Reading from the N-terminus, the 367-residue chain is 2-aminoethylphosphonate--pyruvate transaminase (367 aa).

At lysine 194 the chain carries N6-(pyridoxal phosphate)lysine.

Belongs to the class-V pyridoxal-phosphate-dependent aminotransferase family. PhnW subfamily. In terms of assembly, homodimer. Pyridoxal 5'-phosphate is required as a cofactor.

It carries out the reaction (2-aminoethyl)phosphonate + pyruvate = phosphonoacetaldehyde + L-alanine. Functionally, involved in phosphonate degradation. This Salmonella heidelberg (strain SL476) protein is 2-aminoethylphosphonate--pyruvate transaminase.